We begin with the raw amino-acid sequence, 751 residues long: Probable alpha-galactosidase C (751 aa).

An N-terminal signal peptide occupies residues Met-1–Ala-27. Asn-49, Asn-57, Asn-162, Asn-186, Asn-194, Asn-366, Asn-433, Asn-452, and Asn-500 each carry an N-linked (GlcNAc...) asparagine glycan. Catalysis depends on Asp-510, which acts as the Nucleophile. The active-site Proton donor is Asp-572. An N-linked (GlcNAc...) asparagine glycan is attached at Asn-720.

This sequence belongs to the glycosyl hydrolase 36 family. Homotetramer. Mg(2+) is required as a cofactor. Requires NAD(+) as cofactor.

Its subcellular location is the secreted. It carries out the reaction Hydrolysis of terminal, non-reducing alpha-D-galactose residues in alpha-D-galactosides, including galactose oligosaccharides, galactomannans and galactolipids.. Hydrolyzes a variety of simple alpha-D-galactoside as well as more complex molecules such as oligosaccharides and polysaccharides. The polypeptide is Probable alpha-galactosidase C (aglC) (Aspergillus oryzae (strain ATCC 42149 / RIB 40) (Yellow koji mold)).